The primary structure comprises 366 residues: Inactive PGL/p-HBAD biosynthesis glycosyltransferase Mb2982c (366 aa).

Disordered regions lie at residues 1-23 and 295-366; these read MEET…PNAA and DGDR…HGGP. The span at 295 to 311 shows a compositional bias: basic and acidic residues; it reads DGDRGHRWPEPPEERAG.

It belongs to the UDP-glycosyltransferase family.

This chain is Inactive PGL/p-HBAD biosynthesis glycosyltransferase Mb2982c, found in Mycobacterium bovis (strain ATCC BAA-935 / AF2122/97).